The following is a 1019-amino-acid chain: MAKRGYKLQEFVAHSGNVNCLSIGKKTSRLLLTGGDDYKVNLWSIGKTTSPMSLCGHTSPVDSVAFNSEEVLVLAGASSGVIKLWDLEESKMVRAFTGHRSNCSAVEFHPFGEFLASGSSDTNLRVWDTRKKGCIQTYKGHTRGISTIEFSPDGRWVVSGGLDNVVKVWDLTAGKLLHEFKCHEGPIRSLDFHPLEFLLATGSADRTVKFWDLETFELIGTTRPEATGVRAIAFHPDGQTLFCGLDDGLKVYSWEPVICRDGVDMGWSTLGDFCINEGKFIGCSYYRNSVGIWVSDISELEPYGAVSEDKNECMVKRFSVLNDQSERMGSGPRGSVSPDYETREIKNIYVDCGNLNVAQNPGSLKATLPLESGKVATMVSEKQNAAYFGPAGDKYSSTSRDSDSGEESSYSERESIPFSRTKSGMLLRPAHVRKTLAKFEESKQSAVVQSATRKKSGLAVEEEPQTQNAFLSEQNASKPFDAEDSIIKGITNKFEKALSSEPPTDEANRMFLKPPRIHRSSNSKYNDTRRAMSADPATFGKGGMENSGDVEDIPSKTERVLSREKPGDEQKNTEYPSGSRELNPVKIVEGVNVVSGRTRSLVEKFERGEKTTHTEGASTTIEQNNNAVQEDPRKTSRQTGETPVISTRRARSTPARVMPIVLNRDSNVTSDEPPLTQPARTSSFPVMPVILNQASNVTYDEPSVALTQESRTSHARILPVTFNQATNITSEEASVTLRRQRRNSAARVRPVLLSQATSHECPVTSVRPLRTSPARVMPTKLNQSVNMTSDTSHIASMHRVSPTQMLATPTVIDQVADMTLDETHATQIQPACDNMPQKEEPNISDREDDSDITENLMLTHNEFLSTLQSRLTKLQIVRHFWERSDVKGAIGALRKLTDQSVQADVISILTEKIEILTLDMFSQLVPVLTSLLGSRTERPVNVSLDMLLKLVAVFGTVIRSTVSAPRIVGVDLHANERLEICQICSAGLHKIQRILPVLARRGGLITRKAQELNLVLQEP.

WD repeat units follow at residues 13–53 (AHSG…SPMS), 56–95 (GHTS…MVRA), 98–137 (GHRS…CIQT), 140–181 (GHTR…HEFK), 183–221 (HEGP…LIGT), 224–264 (PEAT…DGVD), and 266–303 (GWST…LEPY). The DWD box signature appears at 114–130 (FLASGSSDTNLRVWDTR). 4 disordered regions span residues 388-424 (FGPA…TKSG), 455-474 (KSGL…LSEQ), 517-581 (IHRS…GSRE), and 607-652 (RGEK…RARS). Positions 465–474 (QTQNAFLSEQ) are enriched in polar residues. A compositionally biased stretch (basic and acidic residues) spans 553–572 (IPSKTERVLSREKPGDEQKN). A compositionally biased stretch (polar residues) spans 614 to 628 (TEGASTTIEQNNNAV).

Belongs to the WD repeat KATNB1 family. In terms of assembly, component of KTN80-KTN1 complexes composed of a hexamer of KTN1-KTN80 heterodimers that sense microtubule (MT) geometry to confer precise MT severing. Interacts directly with AAA1/KTN1 and KTN80.3, and weakly with KTN80.4. As to expression, expressed at low levels in siliques, flowers, leaves, stems and roots.

The protein resides in the cytoplasm. It localises to the cytoskeleton. In terms of biological role, may participate in a complex which severs microtubules in an ATP-dependent manner. Microtubule severing may promote rapid reorganization of cellular microtubule arrays. Confers precision to microtubule (MT) severing by specific targeting of KTN1 to MT cleavage sites such as crossover or branching nucleation sites. Together with other KTN80s, regulates cell elongation by modulating MT organization. This Arabidopsis thaliana (Mouse-ear cress) protein is Katanin p80 WD40 repeat-containing subunit B1 homolog KTN80.1.